The primary structure comprises 465 residues: MGQPMRQEHDSIGGVDVPAAALWGAQTQRSLNNFAIGHQKIPAELIHALARIKQCCAAVNGRHGLLNDQQVALIERAGQAIQTGQQDDHFPLSVWQTGSGTQTNMNVNEVISNLAAQESGENLGSHRPLHPNDHINRSQSTNDVFPAAIHVAAALQLQQELLPELKRLIASLDAKAVAWQDIIKIGRTHLQDAVPLRLGDEVSAWRDRLSDGAHWLTTAHQDLLALPLGGTAVGSGLNTPDRFAHEVCAELASRTGSDFQPADNLFAVMAGHDSLVQTMAQLRRLAVTLLTIANDIRLLACGPRAGLGELLLPANEPGSSIMPGKVNPTQCEAMAMVCTQVIGMDAAVAAAGAGGHLQMNVYKPLIGYNLIEGIRLLQDACRCFRLNLLTGMEADRDRIAFYVERSLMLVTALTPEIGYEKACAIAQHAHRDGLTLREAAMQSGAITDERFDQLIDPAAMASPHR.

Residues 99–101, R127, 130–133, 140–142, and T188 contribute to the substrate site; these read SGT, HPND, and STN. Catalysis depends on H189, which acts as the Proton donor/acceptor. The active site involves S319. Residues S320 and 325–327 contribute to the substrate site; that span reads KVN.

The protein belongs to the class-II fumarase/aspartase family. Fumarase subfamily. Homotetramer.

The protein resides in the cytoplasm. The catalysed reaction is (S)-malate = fumarate + H2O. Its pathway is carbohydrate metabolism; tricarboxylic acid cycle; (S)-malate from fumarate: step 1/1. Involved in the TCA cycle. Catalyzes the stereospecific interconversion of fumarate to L-malate. In Parasynechococcus marenigrum (strain WH8102), this protein is Fumarate hydratase class II.